Consider the following 366-residue polypeptide: UDP-N-acetylglucosamine--N-acetylmuramyl-(pentapeptide) pyrophosphoryl-undecaprenol N-acetylglucosamine transferase (366 aa).

UDP-N-acetyl-alpha-D-glucosamine contacts are provided by residues 22–24, N134, R170, S198, I253, and Q298; that span reads TGG.

The protein belongs to the glycosyltransferase 28 family. MurG subfamily.

The protein localises to the cell inner membrane. The enzyme catalyses di-trans,octa-cis-undecaprenyl diphospho-N-acetyl-alpha-D-muramoyl-L-alanyl-D-glutamyl-meso-2,6-diaminopimeloyl-D-alanyl-D-alanine + UDP-N-acetyl-alpha-D-glucosamine = di-trans,octa-cis-undecaprenyl diphospho-[N-acetyl-alpha-D-glucosaminyl-(1-&gt;4)]-N-acetyl-alpha-D-muramoyl-L-alanyl-D-glutamyl-meso-2,6-diaminopimeloyl-D-alanyl-D-alanine + UDP + H(+). It participates in cell wall biogenesis; peptidoglycan biosynthesis. Its function is as follows. Cell wall formation. Catalyzes the transfer of a GlcNAc subunit on undecaprenyl-pyrophosphoryl-MurNAc-pentapeptide (lipid intermediate I) to form undecaprenyl-pyrophosphoryl-MurNAc-(pentapeptide)GlcNAc (lipid intermediate II). The polypeptide is UDP-N-acetylglucosamine--N-acetylmuramyl-(pentapeptide) pyrophosphoryl-undecaprenol N-acetylglucosamine transferase (Xylella fastidiosa (strain M12)).